Consider the following 104-residue polypeptide: Type IV secretion system protein PtlB homolog (104 aa).

The helical transmembrane segment at isoleucine 30–leucine 50 threads the bilayer.

Belongs to the virB3 family.

Its subcellular location is the cell membrane. This chain is Type IV secretion system protein PtlB homolog (ptlB), found in Bordetella bronchiseptica (strain ATCC BAA-588 / NCTC 13252 / RB50) (Alcaligenes bronchisepticus).